We begin with the raw amino-acid sequence, 200 residues long: 3-isopropylmalate dehydratase small subunit (200 aa).

It belongs to the LeuD family. LeuD type 1 subfamily. In terms of assembly, heterodimer of LeuC and LeuD.

It carries out the reaction (2R,3S)-3-isopropylmalate = (2S)-2-isopropylmalate. It functions in the pathway amino-acid biosynthesis; L-leucine biosynthesis; L-leucine from 3-methyl-2-oxobutanoate: step 2/4. In terms of biological role, catalyzes the isomerization between 2-isopropylmalate and 3-isopropylmalate, via the formation of 2-isopropylmaleate. The chain is 3-isopropylmalate dehydratase small subunit from Actinobacillus pleuropneumoniae serotype 7 (strain AP76).